The primary structure comprises 219 residues: Ras-related protein Rab-3D (219 aa).

An N-acetylalanine modification is found at Ala-2. A GDP-binding site is contributed by 29-37 (GNSSVGKTS). 9 residues coordinate GTP: Ser-31, Ser-32, Val-33, Gly-34, Lys-35, Thr-36, Ser-37, Pro-49, and Ser-53. Thr-36 contacts Mg(2+). A Switch 1 motif is present at residues 49–58 (PAFVSTVGID). Mg(2+) contacts are provided by Thr-54 and Asp-77. A GTP-binding site is contributed by Gly-80. Positions 80 to 96 (GQERYRTITTAYYRGAM) match the Switch 2 motif. At Thr-86 the chain carries Phosphothreonine; by LRRK2. Residues Asn-135, Lys-136, Asp-138, Ala-166, and Lys-167 each contribute to the GTP site. GDP-binding positions include 135–138 (NKCD) and 165–167 (SAK). A Phosphoserine modification is found at Ser-190. Residues 190 to 219 (SLEPSSSPGSNGKGPALGDTPPPQPSSCSC) form a disordered region. Residues 193 to 203 (PSSSPGSNGKG) are compositionally biased toward low complexity. A compositionally biased stretch (pro residues) spans 209–219 (TPPPQPSSCSC). Residues Cys-217 and Cys-219 are each lipidated (S-geranylgeranyl cysteine). Residue Cys-219 is modified to Cysteine methyl ester.

Belongs to the small GTPase superfamily. Rab family. As to quaternary structure, interacts with RIMS1, RIMS2, RPH3A, RPH3AL and RAB3IP. The GTP-bound form interacts with REP15. Interacts with CHM and CHML; phosphorylation at Thr-86 disrupts these interactions. Interacts with MADD (via uDENN domain); the GTP-bound form is preferred for interaction. The cofactor is Mg(2+). Post-translationally, phosphorylation of Thr-86 in the switch II region by LRRK2 prevents the association of RAB regulatory proteins, including CHM and CHML. In terms of tissue distribution, predominantly expressed in the adipocyte tissue, but is also expressed in several other organs including skin, spleen, heart and lung.

It localises to the cell membrane. The catalysed reaction is GTP + H2O = GDP + phosphate + H(+). Regulated by guanine nucleotide exchange factors (GEFs) which promote the exchange of bound GDP for free GTP. Regulated by GTPase activating proteins (GAPs) which increase the GTP hydrolysis activity. Inhibited by GDP dissociation inhibitors (GDIs) which prevent Rab-GDP dissociation. Functionally, the small GTPases Rab are key regulators of intracellular membrane trafficking, from the formation of transport vesicles to their fusion with membranes. Rabs cycle between an inactive GDP-bound form and an active GTP-bound form that is able to recruit to membranes different sets of downstream effectors directly responsible for vesicle formation, movement, tethering and fusion. RAB3D may be involved in the insulin-induced exocytosis of GLUT4-containing vesicles in adipocytes. This is Ras-related protein Rab-3D from Mus musculus (Mouse).